We begin with the raw amino-acid sequence, 298 residues long: Probable 2-(5''-triphosphoribosyl)-3'-dephosphocoenzyme-A synthase 2 (298 aa).

The protein belongs to the CitG/MdcB family.

The enzyme catalyses 3'-dephospho-CoA + ATP = 2'-(5''-triphospho-alpha-D-ribosyl)-3'-dephospho-CoA + adenine. This is Probable 2-(5''-triphosphoribosyl)-3'-dephosphocoenzyme-A synthase 2 from Salmonella choleraesuis (strain SC-B67).